Consider the following 235-residue polypeptide: Large ribosomal subunit protein uL1 (235 aa).

The protein belongs to the universal ribosomal protein uL1 family. Part of the 50S ribosomal subunit.

Its function is as follows. Binds directly to 23S rRNA. The L1 stalk is quite mobile in the ribosome, and is involved in E site tRNA release. Protein L1 is also a translational repressor protein, it controls the translation of the L11 operon by binding to its mRNA. The polypeptide is Large ribosomal subunit protein uL1 (Fervidobacterium nodosum (strain ATCC 35602 / DSM 5306 / Rt17-B1)).